Consider the following 353-residue polypeptide: Photosystem II D2 protein (353 aa).

Thr2 carries the post-translational modification N-acetylthreonine. Thr2 carries the post-translational modification Phosphothreonine. The chain crosses the membrane as a helical span at residues 41–61 (CAYFALGGWFTGTTFVTSWYT). Chlorophyll a is bound at residue His118. Residues 125-141 (GFMLRQFELARSVQLRP) form a helical membrane-spanning segment. Gln130 and Asn143 together coordinate pheophytin a. Residues 153–166 (VFVSVFLIYPLGQS) traverse the membrane as a helical segment. His198 provides a ligand contact to chlorophyll a. A helical transmembrane segment spans residues 208–228 (AALLCAIHGATVENTLFEDGD). 2 residues coordinate a plastoquinone: His215 and Phe262. Residue His215 coordinates Fe cation. His269 lines the Fe cation pocket. The chain crosses the membrane as a helical span at residues 279 to 295 (GLWMSALGVVGLALNLR).

It belongs to the reaction center PufL/M/PsbA/D family. In terms of assembly, PSII is composed of 1 copy each of membrane proteins PsbA, PsbB, PsbC, PsbD, PsbE, PsbF, PsbH, PsbI, PsbJ, PsbK, PsbL, PsbM, PsbT, PsbX, PsbY, PsbZ, Psb30/Ycf12, at least 3 peripheral proteins of the oxygen-evolving complex and a large number of cofactors. It forms dimeric complexes. The cofactor is The D1/D2 heterodimer binds P680, chlorophylls that are the primary electron donor of PSII, and subsequent electron acceptors. It shares a non-heme iron and each subunit binds pheophytin, quinone, additional chlorophylls, carotenoids and lipids. There is also a Cl(-1) ion associated with D1 and D2, which is required for oxygen evolution. The PSII complex binds additional chlorophylls, carotenoids and specific lipids..

It is found in the plastid. The protein localises to the chloroplast thylakoid membrane. The enzyme catalyses 2 a plastoquinone + 4 hnu + 2 H2O = 2 a plastoquinol + O2. In terms of biological role, photosystem II (PSII) is a light-driven water:plastoquinone oxidoreductase that uses light energy to abstract electrons from H(2)O, generating O(2) and a proton gradient subsequently used for ATP formation. It consists of a core antenna complex that captures photons, and an electron transfer chain that converts photonic excitation into a charge separation. The D1/D2 (PsbA/PsbD) reaction center heterodimer binds P680, the primary electron donor of PSII as well as several subsequent electron acceptors. D2 is needed for assembly of a stable PSII complex. The sequence is that of Photosystem II D2 protein from Nymphaea alba (White water-lily).